The primary structure comprises 235 residues: MNELVYGLSALGISLNSVQLGQFETYYQELVDYNSRINLTAITEYKDVQIKHFLDSVSLVLAGIKGDEKLLDVGSGAGFPGLPLKILFPAIQLGLLEATQKKARFLSEITVKLGLSGVEIISQRAEDTAQNPLYRQKYSLVTSRAVADMATLAELTLPFCAIGGRVIAPKKGDIEEEMDRAATAVKKMGGRVFKVIKVELPGLEDGRKLVLLEKISNTPALYPRRAGIPAKTPLI.

Residues Gly-74, Phe-79, Glu-97 to Thr-99, Ala-125 to Glu-126, and Arg-144 contribute to the S-adenosyl-L-methionine site.

The protein belongs to the methyltransferase superfamily. RNA methyltransferase RsmG family.

It localises to the cytoplasm. In terms of biological role, specifically methylates the N7 position of a guanine in 16S rRNA. In Dehalococcoides mccartyi (strain ATCC BAA-2100 / JCM 16839 / KCTC 5957 / BAV1), this protein is Ribosomal RNA small subunit methyltransferase G.